A 394-amino-acid polypeptide reads, in one-letter code: MSKEKFERTKPHVNVGTIGHVDHGKTTLTAAITTVLAKTYGGAARAFDQIDNAPEEKARGITINTSHVEYDTPTRHYAHVDCPGHADYVKNMITGAAQMDGAILVVAATDGPMPQTREHILLGRQVGVPYIIVFLNKCDMVDDEELLELVEMEVRELLSQYDFPGDDTPIVRGSALKALEGDAEWEAKILELAGFLDSYIPEPERAIDKPFLLPIEDVFSISGRGTVVTGRVERGIIKVGEEVEIVGIKETQKSTCTGVEMFRKLLDEGRAGENVGVLLRGIKREEIERGQVLAKPGTIKPHTKFESEVYILSKDEGGRHTPFFKGYRPQFYFRTTDVTGTIELPEGVEMVMPGDNIKMVVTLIHPIAMDDGLRFAIREGGRTVGAGVVAKVLS.

Residues 10-204 enclose the tr-type G domain; it reads KPHVNVGTIG…FLDSYIPEPE (195 aa). The segment at 19-26 is G1; that stretch reads GHVDHGKT. 19-26 is a binding site for GTP; the sequence is GHVDHGKT. Thr26 serves as a coordination point for Mg(2+). Residues 60–64 are G2; the sequence is GITIN. The interval 81–84 is G3; the sequence is DCPG. Residues 81-85 and 136-139 contribute to the GTP site; these read DCPGH and NKCD. The segment at 136 to 139 is G4; sequence NKCD. Residues 174–176 are G5; sequence SAL.

Belongs to the TRAFAC class translation factor GTPase superfamily. Classic translation factor GTPase family. EF-Tu/EF-1A subfamily. In terms of assembly, monomer.

Its subcellular location is the cytoplasm. It catalyses the reaction GTP + H2O = GDP + phosphate + H(+). Its function is as follows. GTP hydrolase that promotes the GTP-dependent binding of aminoacyl-tRNA to the A-site of ribosomes during protein biosynthesis. In Shigella flexneri serotype 5b (strain 8401), this protein is Elongation factor Tu 2.